The following is a 138-amino-acid chain: MWYQRTITLSEKPRGFHLITDEITDKLSGLPPVETGLLHLLLLHTSASLTLNENCDPTVRADMERHFLKTVPDNAAYEHDYEGADDMPSHIKSSVLGVSLLLPVRQGRLQLGTWQGIWLGEHRIHGGPRKIIATLQGE.

Belongs to the UPF0047 family.

In Salmonella typhimurium (strain LT2 / SGSC1412 / ATCC 700720), this protein is UPF0047 protein YjbQ (yjbQ).